The sequence spans 616 residues: Ectonucleoside triphosphate diphosphohydrolase 4 (616 aa).

Residues 1 to 33 (MGRIGISCLFPASWHFSISPVGCPRILNTNLRQ) lie on the Cytoplasmic side of the membrane. A helical transmembrane segment spans residues 34 to 54 (IMVISVLAAAVSLLYFSVVII). Residues 55–559 (RNKYGRLTRD…ASHTHWRGVS (505 aa)) lie on the Lumenal side of the membrane. Glu-222 functions as the Proton acceptor in the catalytic mechanism. Cys-368 and Cys-395 are oxidised to a cystine. Residues Asn-404 and Asn-407 are each glycosylated (N-linked (GlcNAc...) asparagine). A disulfide bridge connects residues Cys-461 and Cys-490. The helical transmembrane segment at 560–580 (FVYNHYLFSGCFLVVLLAILL) threads the bilayer. At 581-616 (YLLRLRRIHRRTPRSSSAAALWMEEGLPAQNAPGTL) the chain is on the cytoplasmic side.

Belongs to the GDA1/CD39 NTPase family. Requires Ca(2+) as cofactor. It depends on Mg(2+) as a cofactor. As to expression, ubiquitous. Highest expression in testis and lowest in bladder.

Its subcellular location is the cytoplasmic vesicle. It is found in the autophagosome membrane. The protein localises to the lysosome membrane. The protein resides in the golgi apparatus membrane. The catalysed reaction is a ribonucleoside 5'-diphosphate + H2O = a ribonucleoside 5'-phosphate + phosphate + H(+). It carries out the reaction a ribonucleoside 5'-triphosphate + H2O = a ribonucleoside 5'-diphosphate + phosphate + H(+). It catalyses the reaction UDP + H2O = UMP + phosphate + H(+). The enzyme catalyses UTP + H2O = UDP + phosphate + H(+). The catalysed reaction is CTP + H2O = CDP + phosphate + H(+). It carries out the reaction GDP + H2O = GMP + phosphate + H(+). It catalyses the reaction GTP + H2O = GDP + phosphate + H(+). The enzyme catalyses 5-methyl-UTP + H2O = 5-methyl-UDP + phosphate + H(+). In terms of biological role, catalyzes the hydrolysis of nucleoside triphosphates and diphosphates in a calcium- or magnesium-dependent manner, with a preference for pyrimidines. Preferentially hydrolyzes UTP and TTP. AMP, ADP, ATP and UMP are not substrates. Preferentially activated by Ca(2+) over Mg(2+). Functionally, has a broad substrate specificity with the ability of cleaving all nucleotide di- and triphosphates with the exception of adenosine di- and triphosphate (ADP and ATP). Preferentially hydrolyzes CTP, UDP, CDP, GTP and GDP. Can use either Ca(2+) or Mg(2+) equally. The protein is Ectonucleoside triphosphate diphosphohydrolase 4 of Homo sapiens (Human).